Reading from the N-terminus, the 287-residue chain is 33 kDa chaperonin (287 aa).

2 disulfide bridges follow: cysteine 233-cysteine 235 and cysteine 266-cysteine 269.

It belongs to the HSP33 family. Under oxidizing conditions two disulfide bonds are formed involving the reactive cysteines. Under reducing conditions zinc is bound to the reactive cysteines and the protein is inactive.

The protein resides in the cytoplasm. Functionally, redox regulated molecular chaperone. Protects both thermally unfolding and oxidatively damaged proteins from irreversible aggregation. Plays an important role in the bacterial defense system toward oxidative stress. The polypeptide is 33 kDa chaperonin (Thermodesulfovibrio yellowstonii (strain ATCC 51303 / DSM 11347 / YP87)).